We begin with the raw amino-acid sequence, 459 residues long: Cysteine--tRNA ligase (459 aa).

Cysteine 27 provides a ligand contact to Zn(2+). The 'HIGH' region motif lies at 29-39; it reads ITVYDDCHIGH. Cysteine 208, histidine 233, and glutamate 237 together coordinate Zn(2+). The 'KMSKS' region motif lies at 265–269; the sequence is KMSKS. An ATP-binding site is contributed by lysine 268.

This sequence belongs to the class-I aminoacyl-tRNA synthetase family. Monomer. Zn(2+) is required as a cofactor.

Its subcellular location is the cytoplasm. The catalysed reaction is tRNA(Cys) + L-cysteine + ATP = L-cysteinyl-tRNA(Cys) + AMP + diphosphate. The sequence is that of Cysteine--tRNA ligase from Francisella philomiragia subsp. philomiragia (strain ATCC 25017 / CCUG 19701 / FSC 153 / O#319-036).